The following is a 361-amino-acid chain: Chorismate synthase (361 aa).

Positions 38-49 are enriched in basic and acidic residues; sequence EKDMQHDLDRRR. Residues 38–58 form a disordered region; that stretch reads EKDMQHDLDRRRPGTSKYTTQ. Position 48 (Arg48) interacts with NADP(+). Residues 125-127, 238-239, Gly278, 293-297, and Arg319 contribute to the FMN site; these read RSS, NA, and KPTSS.

This sequence belongs to the chorismate synthase family. In terms of assembly, homotetramer. FMNH2 is required as a cofactor.

The catalysed reaction is 5-O-(1-carboxyvinyl)-3-phosphoshikimate = chorismate + phosphate. The protein operates within metabolic intermediate biosynthesis; chorismate biosynthesis; chorismate from D-erythrose 4-phosphate and phosphoenolpyruvate: step 7/7. Its function is as follows. Catalyzes the anti-1,4-elimination of the C-3 phosphate and the C-6 proR hydrogen from 5-enolpyruvylshikimate-3-phosphate (EPSP) to yield chorismate, which is the branch point compound that serves as the starting substrate for the three terminal pathways of aromatic amino acid biosynthesis. This reaction introduces a second double bond into the aromatic ring system. The sequence is that of Chorismate synthase from Photobacterium profundum (strain SS9).